Here is a 163-residue protein sequence, read N- to C-terminus: Phosphopantetheine adenylyltransferase (163 aa).

Thr10 is a binding site for substrate. ATP-binding positions include 10–11 and His18; that span reads TF. Substrate is bound by residues Lys42, Leu74, and Arg88. ATP is bound by residues 89-91, Glu99, and 124-130; these read GLR and NSFISST.

The protein belongs to the bacterial CoaD family. Homohexamer. Mg(2+) serves as cofactor.

It localises to the cytoplasm. It carries out the reaction (R)-4'-phosphopantetheine + ATP + H(+) = 3'-dephospho-CoA + diphosphate. The protein operates within cofactor biosynthesis; coenzyme A biosynthesis; CoA from (R)-pantothenate: step 4/5. Reversibly transfers an adenylyl group from ATP to 4'-phosphopantetheine, yielding dephospho-CoA (dPCoA) and pyrophosphate. The polypeptide is Phosphopantetheine adenylyltransferase (Shewanella putrefaciens (strain CN-32 / ATCC BAA-453)).